A 44-amino-acid chain; its full sequence is Defensin heliomicin (44 aa).

Intrachain disulfides connect Cys-7-Cys-32, Cys-18-Cys-40, and Cys-22-Cys-42.

It localises to the secreted. This peptide has potent anti-fungal activity. Has no activity against Gram-negative and Gram-positive bacteria. The protein is Defensin heliomicin of Heliothis virescens (Tobacco budworm moth).